Consider the following 249-residue polypeptide: Fatty acid elongase 5 (249 aa).

3 consecutive transmembrane segments (helical) span residues 23–43 (VFVN…VIVL), 68–88 (VALS…GVFN), and 100–120 (WIFV…FIVL). The short motif at 131-135 (HIYHH) is the HxxHH motif element. The Nucleophile role is filled by H134. Helical transmembrane passes span 138–158 (IGFI…AFFG), 159–179 (AWIN…TSLG), 193–213 (MIQF…HSPI), and 217–236 (WAVL…MRFY).

Belongs to the ELO family.

It is found in the membrane. It carries out the reaction an acyl-CoA + malonyl-CoA + H(+) = a 3-oxoacyl-CoA + CO2 + CoA. It functions in the pathway lipid metabolism; polyunsaturated fatty acid biosynthesis. Its function is as follows. Involved in the synthesis of fatty acids. Elongates C20 polyunsaturated fatty acids (PUFAs) with a preference for n-6 PUFAs. The polypeptide is Fatty acid elongase 5 (Leishmania major).